The following is a 664-amino-acid chain: UvrABC system protein B (664 aa).

In terms of domain architecture, Helicase ATP-binding spans 25–412; sequence KGLVSGLTDQ…LQVVEQLVRP (388 aa). 38–45 contributes to the ATP binding site; it reads GVTGSGKT. The Beta-hairpin motif lies at 91-114; it reads YYDYYQPEAYVPQKDMYIEKDSDI. A Helicase C-terminal domain is found at 428–594; the sequence is QIDDLLEEVK…GIRKAIKDIN (167 aa). Residues 620-655 form the UVR domain; sequence ARLIKELESQMKKAAKNLEFERAALIRDRVVELRAA.

The protein belongs to the UvrB family. Forms a heterotetramer with UvrA during the search for lesions. Interacts with UvrC in an incision complex.

It is found in the cytoplasm. The UvrABC repair system catalyzes the recognition and processing of DNA lesions. A damage recognition complex composed of 2 UvrA and 2 UvrB subunits scans DNA for abnormalities. Upon binding of the UvrA(2)B(2) complex to a putative damaged site, the DNA wraps around one UvrB monomer. DNA wrap is dependent on ATP binding by UvrB and probably causes local melting of the DNA helix, facilitating insertion of UvrB beta-hairpin between the DNA strands. Then UvrB probes one DNA strand for the presence of a lesion. If a lesion is found the UvrA subunits dissociate and the UvrB-DNA preincision complex is formed. This complex is subsequently bound by UvrC and the second UvrB is released. If no lesion is found, the DNA wraps around the other UvrB subunit that will check the other stand for damage. This is UvrABC system protein B from Dehalococcoides mccartyi (strain CBDB1).